A 379-amino-acid polypeptide reads, in one-letter code: Protein RecA (379 aa).

79–86 contributes to the ATP binding site; it reads GPESSGKT.

This sequence belongs to the RecA family.

The protein localises to the cytoplasm. Functionally, can catalyze the hydrolysis of ATP in the presence of single-stranded DNA, the ATP-dependent uptake of single-stranded DNA by duplex DNA, and the ATP-dependent hybridization of homologous single-stranded DNAs. It interacts with LexA causing its activation and leading to its autocatalytic cleavage. In Streptococcus thermophilus, this protein is Protein RecA.